A 395-amino-acid polypeptide reads, in one-letter code: NADH-quinone oxidoreductase subunit D (395 aa).

The protein belongs to the complex I 49 kDa subunit family. As to quaternary structure, NDH-1 is composed of 14 different subunits. Subunits NuoB, C, D, E, F, and G constitute the peripheral sector of the complex.

The protein localises to the cell inner membrane. It catalyses the reaction a quinone + NADH + 5 H(+)(in) = a quinol + NAD(+) + 4 H(+)(out). NDH-1 shuttles electrons from NADH, via FMN and iron-sulfur (Fe-S) centers, to quinones in the respiratory chain. The immediate electron acceptor for the enzyme in this species is believed to be ubiquinone. Couples the redox reaction to proton translocation (for every two electrons transferred, four hydrogen ions are translocated across the cytoplasmic membrane), and thus conserves the redox energy in a proton gradient. The sequence is that of NADH-quinone oxidoreductase subunit D from Anaplasma phagocytophilum (strain HZ).